Reading from the N-terminus, the 783-residue chain is Tripartite motif-containing protein 67 (783 aa).

Residues 7-42 form an RING-type; degenerate zinc finger; sequence CPVCGSLFREPIILPCSHNVCLPCARTIAVQTPDGE. The B box-type 1; degenerate zinc finger occupies 206-253; that stretch reads AICQLCDRTPPEPAATLCEQCDVLYCSACQLKCHPSRGPFAKHRLVQP. The segment at 247 to 295 is disordered; that stretch reads KHRLVQPPPPPPPPAEAASGPTGTAQGAPSGGGGCKSPGGAGAGATGGS. Positions 252–261 are enriched in pro residues; that stretch reads QPPPPPPPPA. Gly residues predominate over residues 275–293; the sequence is PSGGGGCKSPGGAGAGATG. The B box-type 2 zinc-finger motif lies at 298–340; that stretch reads RKFPTCPEHEMENYSMYCVSCRTPVCYLCLEEGRHAKHEVKPL. 4 residues coordinate Zn(2+): C303, H306, C326, and H332. Positions 345 to 382 form a coiled coil; sequence KQHKAQLSQALNGVSDKAKEAKEFLVQLKNILQQIQEN. The COS domain occupies 448-506; it reads IKENDPSGFLQISDALIKRVQVSQEQWVKGALEPKVSAEFDLTLDSEPLLQAIHQLDFI. The Fibronectin type-III domain maps to 513-607; sequence PPVPLLQLEK…KTVVLQTSDV (95 aa). The B30.2/SPRY domain maps to 589–780; it reads NSSGVGPYSK…VPTNLGRPKL (192 aa).

Belongs to the TRIM/RBCC family.

Its subcellular location is the cytoplasm. The protein resides in the cytoskeleton. This Homo sapiens (Human) protein is Tripartite motif-containing protein 67 (TRIM67).